The chain runs to 48 residues: MKVVSSIGSLKNRSKDCQIVKRRGRIYVICKTDPRLKVRQGGAKMKRK.

This sequence belongs to the bacterial ribosomal protein bL36 family.

Its subcellular location is the plastid. The protein localises to the chloroplast. The chain is Large ribosomal subunit protein bL36c (rpl36) from Guillardia theta (Cryptophyte).